The following is a 325-amino-acid chain: Methionyl-tRNA formyltransferase (325 aa).

112–115 contacts (6S)-5,6,7,8-tetrahydrofolate; it reads SLLP.

Belongs to the Fmt family.

The enzyme catalyses L-methionyl-tRNA(fMet) + (6R)-10-formyltetrahydrofolate = N-formyl-L-methionyl-tRNA(fMet) + (6S)-5,6,7,8-tetrahydrofolate + H(+). Its function is as follows. Attaches a formyl group to the free amino group of methionyl-tRNA(fMet). The formyl group appears to play a dual role in the initiator identity of N-formylmethionyl-tRNA by promoting its recognition by IF2 and preventing the misappropriation of this tRNA by the elongation apparatus. In Roseiflexus sp. (strain RS-1), this protein is Methionyl-tRNA formyltransferase.